The primary structure comprises 955 residues: 4-alpha-glucanotransferase DPE2 (955 aa).

M1 is subject to N-acetylmethionine. CBM20 domains follow at residues 13 to 122 (KSSK…LWQS) and 157 to 270 (SDQD…PWRG). Residues 925 to 955 (SGRSVPANVSGEDINKSRGEVIANGSTKPNP) form a disordered region.

It belongs to the disproportionating enzyme family.

The protein resides in the cytoplasm. The protein localises to the cytosol. The catalysed reaction is Transfers a segment of a (1-&gt;4)-alpha-D-glucan to a new position in an acceptor, which may be glucose or a (1-&gt;4)-alpha-D-glucan.. Inactivated in response to cold stress. Cytosolic alpha-glucanotransferase essential for the cytosolic metabolism of maltose, an intermediate on the pathway by which starch is converted to sucrose in leaves at night. Metabolizes maltose exported from the chloroplast and is specific for beta-maltose. May play a role in freezing tolerance. Temperature drop induces inactivation of DPE2 that leads to rapid accumulation of maltose, a solute that protects cells from freezing damage. The sequence is that of 4-alpha-glucanotransferase DPE2 (DPE2) from Arabidopsis thaliana (Mouse-ear cress).